The chain runs to 196 residues: Charged multivesicular body protein 1a (196 aa).

Met-1 is modified (N-acetylmethionine). Residues 5 to 47 (LFQLKFTAKQLEKLAKKAEKDSKAEQAKVKKALLQKNVECARV) adopt a coiled-coil conformation. Ser-101 is modified (phosphoserine). Positions 102-124 (TMDLQKVSSVMDRFEQQVQNLDV) form a coiled coil. Ser-173 bears the Phosphoserine mark. A disordered region spans residues 173–196 (SAVGESSVRSQEDQLSRRLAALRN). An MIT-interacting motif motif is present at residues 185-195 (DQLSRRLAALR).

Belongs to the SNF7 family. As to quaternary structure, probable peripherally associated component of the endosomal sorting required for transport complex III (ESCRT-III). ESCRT-III components are thought to multimerize to form a flat lattice on the perimeter membrane of the endosome. Several assembly forms of ESCRT-III may exist that interact and act sequentially. Self-associates. Interacts with CHMP1B. Interacts with VPS4A. Interacts with VPS4B. Interacts with PHF1. Interacts with IST1. Interacts with MITD1. In terms of tissue distribution, expressed in placenta, cultured skin fibroblasts and in osteoblast cell line MG-63.

The protein resides in the cytoplasm. It localises to the endosome membrane. Its subcellular location is the nucleus matrix. Its function is as follows. Probable peripherally associated component of the endosomal sorting required for transport complex III (ESCRT-III) which is involved in multivesicular bodies (MVBs) formation and sorting of endosomal cargo proteins into MVBs. MVBs contain intraluminal vesicles (ILVs) that are generated by invagination and scission from the limiting membrane of the endosome and mostly are delivered to lysosomes enabling degradation of membrane proteins, such as stimulated growth factor receptors, lysosomal enzymes and lipids. The MVB pathway appears to require the sequential function of ESCRT-O, -I,-II and -III complexes. ESCRT-III proteins mostly dissociate from the invaginating membrane before the ILV is released. The ESCRT machinery also functions in topologically equivalent membrane fission events, such as the terminal stages of cytokinesis and the budding of enveloped viruses (HIV-1 and other lentiviruses). ESCRT-III proteins are believed to mediate the necessary vesicle extrusion and/or membrane fission activities, possibly in conjunction with the AAA ATPase VPS4. Involved in cytokinesis. Involved in recruiting VPS4A and/or VPS4B to the midbody of dividing cells. May also be involved in chromosome condensation. Targets the Polycomb group (PcG) protein BMI1/PCGF4 to regions of condensed chromatin. May play a role in stable cell cycle progression and in PcG gene silencing. In Homo sapiens (Human), this protein is Charged multivesicular body protein 1a (CHMP1A).